Reading from the N-terminus, the 83-residue chain is Small ribosomal subunit protein bS16 (83 aa).

The protein belongs to the bacterial ribosomal protein bS16 family.

In Pseudomonas fluorescens (strain SBW25), this protein is Small ribosomal subunit protein bS16.